The following is a 1420-amino-acid chain: DNA-directed RNA polymerase subunit beta' (1420 aa).

The Zn(2+) site is built by Cys-70, Cys-72, Cys-85, and Cys-88. Asp-464, Asp-466, and Asp-468 together coordinate Mg(2+). The Zn(2+) site is built by Cys-823, Cys-897, Cys-904, and Cys-907.

It belongs to the RNA polymerase beta' chain family. In terms of assembly, the RNAP catalytic core consists of 2 alpha, 1 beta, 1 beta' and 1 omega subunit. When a sigma factor is associated with the core the holoenzyme is formed, which can initiate transcription. The cofactor is Mg(2+). It depends on Zn(2+) as a cofactor.

The enzyme catalyses RNA(n) + a ribonucleoside 5'-triphosphate = RNA(n+1) + diphosphate. In terms of biological role, DNA-dependent RNA polymerase catalyzes the transcription of DNA into RNA using the four ribonucleoside triphosphates as substrates. The chain is DNA-directed RNA polymerase subunit beta' from Polynucleobacter asymbioticus (strain DSM 18221 / CIP 109841 / QLW-P1DMWA-1) (Polynucleobacter necessarius subsp. asymbioticus).